Reading from the N-terminus, the 287-residue chain is Probable endonuclease 4 (287 aa).

9 residues coordinate Zn(2+): His69, His109, Glu144, Asp178, His181, His215, Asp228, His230, and Glu260.

Belongs to the AP endonuclease 2 family. Requires Zn(2+) as cofactor.

The catalysed reaction is Endonucleolytic cleavage to 5'-phosphooligonucleotide end-products.. Functionally, endonuclease IV plays a role in DNA repair. It cleaves phosphodiester bonds at apurinic or apyrimidinic (AP) sites, generating a 3'-hydroxyl group and a 5'-terminal sugar phosphate. In Thermotoga neapolitana (strain ATCC 49049 / DSM 4359 / NBRC 107923 / NS-E), this protein is Probable endonuclease 4.